A 579-amino-acid polypeptide reads, in one-letter code: Potassium-transporting ATPase potassium-binding subunit (579 aa).

A run of 10 helical transmembrane segments spans residues 1–21 (MISN…ACVV), 64–84 (HYAL…YGLQ), 135–155 (GLTV…IGLI), 178–198 (IYIL…QGVV), 265–285 (FLEL…FGLM), 293–313 (WAIL…AVSA), 398–418 (GLYG…LMVG), 435–455 (MAAL…AIAV), 503–523 (WLGI…LAIA), and 549–569 (LLIG…LALG).

It belongs to the KdpA family. The system is composed of three essential subunits: KdpA, KdpB and KdpC.

The protein localises to the cell membrane. Functionally, part of the high-affinity ATP-driven potassium transport (or Kdp) system, which catalyzes the hydrolysis of ATP coupled with the electrogenic transport of potassium into the cytoplasm. This subunit binds the extracellular potassium ions and delivers the ions to the membrane domain of KdpB through an intramembrane tunnel. This chain is Potassium-transporting ATPase potassium-binding subunit, found in Herpetosiphon aurantiacus (strain ATCC 23779 / DSM 785 / 114-95).